Reading from the N-terminus, the 921-residue chain is Valine--tRNA ligase (921 aa).

Positions 40–50 match the 'HIGH' region motif; sequence PNVTGSLHMGH. Positions 522–526 match the 'KMSKS' region motif; it reads KMSKS. K525 provides a ligand contact to ATP. Residues 849–921 are a coiled coil; sequence MADLIDKEAE…LQHKNRIESL (73 aa).

Belongs to the class-I aminoacyl-tRNA synthetase family. ValS type 1 subfamily. In terms of assembly, monomer.

The protein resides in the cytoplasm. It catalyses the reaction tRNA(Val) + L-valine + ATP = L-valyl-tRNA(Val) + AMP + diphosphate. Its function is as follows. Catalyzes the attachment of valine to tRNA(Val). As ValRS can inadvertently accommodate and process structurally similar amino acids such as threonine, to avoid such errors, it has a 'posttransfer' editing activity that hydrolyzes mischarged Thr-tRNA(Val) in a tRNA-dependent manner. The protein is Valine--tRNA ligase of Legionella pneumophila (strain Paris).